The sequence spans 1400 residues: DNA-directed RNA polymerase subunit beta' (1400 aa).

4 residues coordinate Zn(2+): C71, C73, C86, and C89. Mg(2+) contacts are provided by D462, D464, and D466. 4 residues coordinate Zn(2+): C820, C893, C900, and C903.

This sequence belongs to the RNA polymerase beta' chain family. As to quaternary structure, the RNAP catalytic core consists of 2 alpha, 1 beta, 1 beta' and 1 omega subunit. When a sigma factor is associated with the core the holoenzyme is formed, which can initiate transcription. It depends on Mg(2+) as a cofactor. Zn(2+) serves as cofactor.

It catalyses the reaction RNA(n) + a ribonucleoside 5'-triphosphate = RNA(n+1) + diphosphate. DNA-dependent RNA polymerase catalyzes the transcription of DNA into RNA using the four ribonucleoside triphosphates as substrates. The sequence is that of DNA-directed RNA polymerase subunit beta' from Methylobacterium sp. (strain 4-46).